Consider the following 425-residue polypeptide: Phosphoribosylamine--glycine ligase (425 aa).

The region spanning 107–312 (KDLCARYNIP…LLVLLNAAVD (206 aa)) is the ATP-grasp domain. 133 to 193 (VDQTGAPIVI…EEFMTGEEAS (61 aa)) contacts ATP. A disordered region spans residues 214–233 (RVGDGDVGPNTGGMGAYSPA). Mg(2+) contacts are provided by Glu282 and Asn284.

Belongs to the GARS family. Requires Mg(2+) as cofactor. Mn(2+) is required as a cofactor.

The enzyme catalyses 5-phospho-beta-D-ribosylamine + glycine + ATP = N(1)-(5-phospho-beta-D-ribosyl)glycinamide + ADP + phosphate + H(+). It participates in purine metabolism; IMP biosynthesis via de novo pathway; N(1)-(5-phospho-D-ribosyl)glycinamide from 5-phospho-alpha-D-ribose 1-diphosphate: step 2/2. This chain is Phosphoribosylamine--glycine ligase, found in Mesorhizobium japonicum (strain LMG 29417 / CECT 9101 / MAFF 303099) (Mesorhizobium loti (strain MAFF 303099)).